Here is a 334-residue protein sequence, read N- to C-terminus: Dihydroorotate dehydrogenase (quinone) (334 aa).

FMN-binding positions include 59–63 (AGLDK) and threonine 83. Lysine 63 provides a ligand contact to substrate. 108–112 (NRMGF) contacts substrate. FMN-binding residues include asparagine 136 and asparagine 169. A substrate-binding site is contributed by asparagine 169. Residue serine 172 is the Nucleophile of the active site. Asparagine 174 is a substrate binding site. Residues lysine 214 and threonine 242 each coordinate FMN. 243-244 (NT) provides a ligand contact to substrate. FMN contacts are provided by residues glycine 265, glycine 294, and 315–316 (YS).

This sequence belongs to the dihydroorotate dehydrogenase family. Type 2 subfamily. As to quaternary structure, monomer. FMN is required as a cofactor.

Its subcellular location is the cell membrane. It catalyses the reaction (S)-dihydroorotate + a quinone = orotate + a quinol. It participates in pyrimidine metabolism; UMP biosynthesis via de novo pathway; orotate from (S)-dihydroorotate (quinone route): step 1/1. Functionally, catalyzes the conversion of dihydroorotate to orotate with quinone as electron acceptor. This Acinetobacter baylyi (strain ATCC 33305 / BD413 / ADP1) protein is Dihydroorotate dehydrogenase (quinone).